A 71-amino-acid chain; its full sequence is Small ribosomal subunit protein bS21 (71 aa).

This sequence belongs to the bacterial ribosomal protein bS21 family.

In Alteromonas mediterranea (strain DSM 17117 / CIP 110805 / LMG 28347 / Deep ecotype), this protein is Small ribosomal subunit protein bS21.